The sequence spans 156 residues: Ribosomal RNA large subunit methyltransferase H (156 aa).

S-adenosyl-L-methionine is bound by residues L73, G104, and L123 to M128.

It belongs to the RNA methyltransferase RlmH family. In terms of assembly, homodimer.

It localises to the cytoplasm. The enzyme catalyses pseudouridine(1915) in 23S rRNA + S-adenosyl-L-methionine = N(3)-methylpseudouridine(1915) in 23S rRNA + S-adenosyl-L-homocysteine + H(+). In terms of biological role, specifically methylates the pseudouridine at position 1915 (m3Psi1915) in 23S rRNA. This chain is Ribosomal RNA large subunit methyltransferase H, found in Proteus mirabilis (strain HI4320).